The chain runs to 447 residues: Tubulin beta chain (447 aa).

GTP-binding residues include Gln11, Glu69, Ser138, Gly142, Thr143, Gly144, Asn204, and Asn226. Glu69 provides a ligand contact to Mg(2+). The segment at 424 to 447 is disordered; it reads QYQDASISEGEEDYEEEPQVENEE. Over residues 432 to 447 the composition is skewed to acidic residues; sequence EGEEDYEEEPQVENEE.

The protein belongs to the tubulin family. Dimer of alpha and beta chains. A typical microtubule is a hollow water-filled tube with an outer diameter of 25 nm and an inner diameter of 15 nM. Alpha-beta heterodimers associate head-to-tail to form protofilaments running lengthwise along the microtubule wall with the beta-tubulin subunit facing the microtubule plus end conferring a structural polarity. Microtubules usually have 13 protofilaments but different protofilament numbers can be found in some organisms and specialized cells. The cofactor is Mg(2+).

The protein resides in the cytoplasm. The protein localises to the cytoskeleton. In terms of biological role, tubulin is the major constituent of microtubules, a cylinder consisting of laterally associated linear protofilaments composed of alpha- and beta-tubulin heterodimers. Microtubules grow by the addition of GTP-tubulin dimers to the microtubule end, where a stabilizing cap forms. Below the cap, tubulin dimers are in GDP-bound state, owing to GTPase activity of alpha-tubulin. This is Tubulin beta chain from Uncinula necator (Grape powdery mildew).